The chain runs to 277 residues: Putative phosphoenolpyruvate synthase regulatory protein (277 aa).

157–164 lines the ADP pocket; the sequence is GVSRSGKT.

This sequence belongs to the pyruvate, phosphate/water dikinase regulatory protein family. PSRP subfamily.

The catalysed reaction is [pyruvate, water dikinase] + ADP = [pyruvate, water dikinase]-phosphate + AMP + H(+). It carries out the reaction [pyruvate, water dikinase]-phosphate + phosphate + H(+) = [pyruvate, water dikinase] + diphosphate. Its function is as follows. Bifunctional serine/threonine kinase and phosphorylase involved in the regulation of the phosphoenolpyruvate synthase (PEPS) by catalyzing its phosphorylation/dephosphorylation. This chain is Putative phosphoenolpyruvate synthase regulatory protein, found in Vibrio atlanticus (strain LGP32) (Vibrio splendidus (strain Mel32)).